Here is a 364-residue protein sequence, read N- to C-terminus: Pre-small/secreted glycoprotein (364 aa).

Residues 1–32 (MGVTGILQLPRDRFKRTSFFLWVIILFQRTFS) form the signal peptide. Residue Asn-40 is glycosylated (N-linked (GlcNAc...) asparagine; by host). Disulfide bonds link Cys-108–Cys-135 and Cys-121–Cys-147. Asn-204, Asn-228, Asn-238, Asn-257, and Asn-268 each carry an N-linked (GlcNAc...) asparagine; by host glycan.

The protein belongs to the filoviruses glycoprotein family. As to quaternary structure, homodimer; disulfide-linked. The homodimers are linked by two disulfide bonds in a parallel orientation. In terms of assembly, monomer. In terms of processing, this precursor is processed into mature sGP and delta-peptide by host furin or furin-like proteases. The cleavage site corresponds to the furin optimal cleavage sequence [KR]-X-[KR]-R. Post-translationally, N-glycosylated. O-glycosylated.

It is found in the secreted. Functionally, seems to possess an anti-inflammatory activity as it can reverse the barrier-decreasing effects of TNF alpha. Might therefore contribute to the lack of inflammatory reaction seen during infection in spite the of extensive necrosis and massive virus production. Does not seem to be involved in activation of primary macrophages. Does not seem to interact specifically with neutrophils. Its function is as follows. Viroporin that permeabilizes mammalian cell plasma membranes. It acts by altering permeation of ionic compounds and small molecules. This activity may lead to viral enterotoxic activity. In Epomops franqueti (Franquet's epauletted fruit bat), this protein is Pre-small/secreted glycoprotein (GP).